A 334-amino-acid polypeptide reads, in one-letter code: Trans-1,2-dihydrobenzene-1,2-diol dehydrogenase (334 aa).

It belongs to the Gfo/Idh/MocA family. Homodimer. In terms of tissue distribution, small intestine.

The catalysed reaction is (1R,2R)-1,2-dihydrobenzene-1,2-diol + NADP(+) = catechol + NADPH + H(+). It carries out the reaction D-xylose + NADP(+) = D-xylono-1,5-lactone + NADPH + H(+). The chain is Trans-1,2-dihydrobenzene-1,2-diol dehydrogenase (DHDH) from Homo sapiens (Human).